Here is a 518-residue protein sequence, read N- to C-terminus: Type II methyltransferase M.HindII (518 aa).

Belongs to the N(4)/N(6)-methyltransferase family.

It carries out the reaction a 2'-deoxyadenosine in DNA + S-adenosyl-L-methionine = an N(6)-methyl-2'-deoxyadenosine in DNA + S-adenosyl-L-homocysteine + H(+). A gamma subtype methylase, recognizes the double-stranded sequence 5'-GTYRAC-3', methylates A-5 on both strands, and protects the DNA from cleavage by the HindII endonuclease. The chain is Type II methyltransferase M.HindII (hindIIM) from Haemophilus influenzae (strain ATCC 51907 / DSM 11121 / KW20 / Rd).